Here is a 289-residue protein sequence, read N- to C-terminus: Bifunctional protein FolD (289 aa).

Residues 166-168 and Ile232 each bind NADP(+); that span reads GVS.

The protein belongs to the tetrahydrofolate dehydrogenase/cyclohydrolase family. Homodimer.

The enzyme catalyses (6R)-5,10-methylene-5,6,7,8-tetrahydrofolate + NADP(+) = (6R)-5,10-methenyltetrahydrofolate + NADPH. It carries out the reaction (6R)-5,10-methenyltetrahydrofolate + H2O = (6R)-10-formyltetrahydrofolate + H(+). The protein operates within one-carbon metabolism; tetrahydrofolate interconversion. Its function is as follows. Catalyzes the oxidation of 5,10-methylenetetrahydrofolate to 5,10-methenyltetrahydrofolate and then the hydrolysis of 5,10-methenyltetrahydrofolate to 10-formyltetrahydrofolate. This is Bifunctional protein FolD from Methylobacillus flagellatus (strain ATCC 51484 / DSM 6875 / VKM B-1610 / KT).